The chain runs to 506 residues: Putative transporter SVOPL (506 aa).

Helical transmembrane passes span 57 to 77 (SIGF…ANIV), 104 to 124 (ALVS…CGYI), 133 to 153 (VVFG…FSTS), 190 to 210 (LLPL…VLGM), 220 to 240 (WMIR…MFIP), 297 to 317 (TSLL…GSVL), 362 to 382 (LISC…LNIV), 397 to 417 (FFFM…LLFL), 444 to 464 (IGMG…PFIA), and 472 to 492 (VILA…GVFF).

The protein belongs to the major facilitator superfamily.

The protein resides in the membrane. The protein is Putative transporter SVOPL (svopl) of Danio rerio (Zebrafish).